A 388-amino-acid chain; its full sequence is Succinate--CoA ligase [ADP-forming] subunit beta (388 aa).

The ATP-grasp domain occupies 9 to 244 (KQLFAEYGLP…PSQEDEREAH (236 aa)). Residues Lys46, 53–55 (GRG), Glu99, Ser102, and Glu107 each bind ATP. Positions 199 and 213 each coordinate Mg(2+). Residues Asn264 and 321 to 323 (GIV) each bind substrate.

Belongs to the succinate/malate CoA ligase beta subunit family. As to quaternary structure, heterotetramer of two alpha and two beta subunits. Mg(2+) serves as cofactor.

The enzyme catalyses succinate + ATP + CoA = succinyl-CoA + ADP + phosphate. The catalysed reaction is GTP + succinate + CoA = succinyl-CoA + GDP + phosphate. The protein operates within carbohydrate metabolism; tricarboxylic acid cycle; succinate from succinyl-CoA (ligase route): step 1/1. Its function is as follows. Succinyl-CoA synthetase functions in the citric acid cycle (TCA), coupling the hydrolysis of succinyl-CoA to the synthesis of either ATP or GTP and thus represents the only step of substrate-level phosphorylation in the TCA. The beta subunit provides nucleotide specificity of the enzyme and binds the substrate succinate, while the binding sites for coenzyme A and phosphate are found in the alpha subunit. In Aliivibrio salmonicida (strain LFI1238) (Vibrio salmonicida (strain LFI1238)), this protein is Succinate--CoA ligase [ADP-forming] subunit beta.